Consider the following 305-residue polypeptide: UDP-3-O-acyl-N-acetylglucosamine deacetylase (305 aa).

Residues H79, H238, and D242 each contribute to the Zn(2+) site. H265 serves as the catalytic Proton donor.

It belongs to the LpxC family. Zn(2+) is required as a cofactor.

It catalyses the reaction a UDP-3-O-[(3R)-3-hydroxyacyl]-N-acetyl-alpha-D-glucosamine + H2O = a UDP-3-O-[(3R)-3-hydroxyacyl]-alpha-D-glucosamine + acetate. It functions in the pathway glycolipid biosynthesis; lipid IV(A) biosynthesis; lipid IV(A) from (3R)-3-hydroxytetradecanoyl-[acyl-carrier-protein] and UDP-N-acetyl-alpha-D-glucosamine: step 2/6. Catalyzes the hydrolysis of UDP-3-O-myristoyl-N-acetylglucosamine to form UDP-3-O-myristoylglucosamine and acetate, the committed step in lipid A biosynthesis. The chain is UDP-3-O-acyl-N-acetylglucosamine deacetylase from Shewanella woodyi (strain ATCC 51908 / MS32).